A 170-amino-acid polypeptide reads, in one-letter code: NADH-quinone oxidoreductase subunit B (170 aa).

Residues Cys-42, Cys-43, Cys-107, and Cys-136 each coordinate [4Fe-4S] cluster.

This sequence belongs to the complex I 20 kDa subunit family. In terms of assembly, NDH-1 is composed of 14 different subunits. Subunits NuoB, C, D, E, F, and G constitute the peripheral sector of the complex. The cofactor is [4Fe-4S] cluster.

Its subcellular location is the cell inner membrane. The enzyme catalyses a quinone + NADH + 5 H(+)(in) = a quinol + NAD(+) + 4 H(+)(out). In terms of biological role, NDH-1 shuttles electrons from NADH, via FMN and iron-sulfur (Fe-S) centers, to quinones in the respiratory chain. The immediate electron acceptor for the enzyme in this species is believed to be ubiquinone. Couples the redox reaction to proton translocation (for every two electrons transferred, four hydrogen ions are translocated across the cytoplasmic membrane), and thus conserves the redox energy in a proton gradient. This Campylobacter curvus (strain 525.92) protein is NADH-quinone oxidoreductase subunit B.